Reading from the N-terminus, the 515-residue chain is Membrane-bound transcription factor site-2 protease (515 aa).

Topologically, residues 1-3 (MIP) are cytoplasmic. A helical transmembrane segment spans residues 4-24 (VSLLVVVVGGWTAVYLADLVL). Over 25 to 74 (KSSVYFKHSYEDWLENNGLSISPFHIRWQTSIFNRAFYSWGRRKARMLYQ) the chain is Lumenal. A run of 2 helical transmembrane segments spans residues 75 to 95 (WFNF…FLLG) and 96 to 107 (KTLMQTLAQMMA). Over 108–140 (DSPSPYSSSSSSSSSSSSSSSSSSSLHNEQVLQ) the chain is Lumenal. Residues 141-165 (VVVPGINLPVNQLTYFFAAVLISGV) form a helical membrane-spanning segment. His167 is a Zn(2+) binding site. Glu168 is an active-site residue. 3 helical membrane passes run 170–182 (GHGI…QVRF), 183–205 (NGFG…TTHL), and 225–247 (FVLA…PFYY). His171 is a Zn(2+) binding site. Over 248 to 442 (TGVGVLITEV…LPVIVETFVK (195 aa)) the chain is Lumenal. Asn333 carries N-linked (GlcNAc...) asparagine glycosylation. The next 2 helical transmembrane spans lie at 443–460 (YLIS…VPCF) and 461–472 (ALDGQWILNSFL). Residues 473-488 (DATLTSVIGDNDVKDL) are Lumenal-facing. The helical transmembrane segment at 489–509 (IGFFILLGGSVLLAANVTLGL) threads the bilayer. At 510–515 (WMVTAR) the chain is on the cytoplasmic side.

This sequence belongs to the peptidase M50A family. It depends on Zn(2+) as a cofactor.

The protein resides in the membrane. It localises to the cytoplasm. Its subcellular location is the golgi apparatus membrane. The enzyme catalyses Cleaves several transcription factors that are type-2 transmembrane proteins within membrane-spanning domains. Known substrates include sterol regulatory element-binding protein (SREBP) -1, SREBP-2 and forms of the transcriptional activator ATF6. SREBP-2 is cleaved at the site 477-DRSRILL-|-CVLTFLCLSFNPLTSLLQWGGA-505. The residues Asn-Pro, 11 residues distal to the site of cleavage in the membrane-spanning domain, are important for cleavage by S2P endopeptidase. Replacement of either of these residues does not prevent cleavage, but there is no cleavage if both of these residues are replaced.. Its function is as follows. Zinc metalloprotease that mediates intramembrane proteolysis of proteins such as ATF6, ATF6B, SREBF1/SREBP1 and SREBF2/SREBP2. Catalyzes the second step in the proteolytic activation of the sterol regulatory element-binding proteins (SREBPs) SREBF1/SREBP1 and SREBF2/SREBP2: cleaves SREBPs within the first transmembrane segment, thereby releasing the N-terminal segment with a portion of the transmembrane segment attached. Mature N-terminal SREBP fragments shuttle to the nucleus and activate gene transcription. Also mediates the second step in the proteolytic activation of the cyclic AMP-dependent transcription factor ATF-6 (ATF6 and ATF6B). Involved in intramembrane proteolysis during bone formation. In astrocytes and osteoblasts, upon DNA damage and ER stress, mediates the second step of the regulated intramembrane proteolytic activation of the transcription factor CREB3L1, leading to the inhibition of cell-cycle progression. This is Membrane-bound transcription factor site-2 protease (Mbtps2) from Mus musculus (Mouse).